A 570-amino-acid polypeptide reads, in one-letter code: Periplasmic trehalase (570 aa).

The signal sequence occupies residues 1 to 34 (MIPPEIRRSVLLQKAIKLALAGTLLTFASFSATA). Substrate is bound by residues Arg-159, 166–167 (WD), Asn-203, 212–214 (RSQ), 284–286 (RPE), and Gly-317. Catalysis depends on proton donor/acceptor residues Asp-319 and Glu-503. Glu-518 is a binding site for substrate. The disordered stretch occupies residues 544-570 (KPCDSVPSTRPASLSATPTKTPSAATQ). Low complexity predominate over residues 554–570 (PASLSATPTKTPSAATQ).

The protein belongs to the glycosyl hydrolase 37 family. Monomer.

It localises to the periplasm. It catalyses the reaction alpha,alpha-trehalose + H2O = alpha-D-glucose + beta-D-glucose. Functionally, provides the cells with the ability to utilize trehalose at high osmolarity by splitting it into glucose molecules that can subsequently be taken up by the phosphotransferase-mediated uptake system. The polypeptide is Periplasmic trehalase (Salmonella newport (strain SL254)).